Consider the following 128-residue polypeptide: DNA-directed RNA polymerase subunit omega (128 aa).

The disordered stretch occupies residues 87–106 (ARSSQAAPKSAPGQEIGKSF).

This sequence belongs to the RNA polymerase subunit omega family. The RNAP catalytic core consists of 2 alpha, 1 beta, 1 beta' and 1 omega subunit. When a sigma factor is associated with the core the holoenzyme is formed, which can initiate transcription.

The catalysed reaction is RNA(n) + a ribonucleoside 5'-triphosphate = RNA(n+1) + diphosphate. Promotes RNA polymerase assembly. Latches the N- and C-terminal regions of the beta' subunit thereby facilitating its interaction with the beta and alpha subunits. In Anaplasma marginale (strain Florida), this protein is DNA-directed RNA polymerase subunit omega.